Here is a 172-residue protein sequence, read N- to C-terminus: Bifunctional protein PyrR (172 aa).

The short motif at Leu-90–Thr-102 is the PRPP-binding element.

The protein belongs to the purine/pyrimidine phosphoribosyltransferase family. PyrR subfamily.

The catalysed reaction is UMP + diphosphate = 5-phospho-alpha-D-ribose 1-diphosphate + uracil. In terms of biological role, regulates the transcription of the pyrimidine nucleotide (pyr) operon in response to exogenous pyrimidines. Its function is as follows. Also displays a weak uracil phosphoribosyltransferase activity which is not physiologically significant. This Pseudomonas putida (strain GB-1) protein is Bifunctional protein PyrR.